A 775-amino-acid polypeptide reads, in one-letter code: GRIP and coiled-coil domain-containing protein 1 (775 aa).

Residues serine 13–valine 61 are a coiled coil. A compositionally biased stretch (basic and acidic residues) spans aspartate 84–aspartate 93. Disordered regions lie at residues aspartate 84 to glutamate 153 and glycine 614 to leucine 639. Composition is skewed to low complexity over residues serine 94–threonine 110, alanine 133–glycine 147, and aspartate 629–serine 638. The stretch at glutamate 153–leucine 763 forms a coiled coil. The region spanning glutamine 713–leucine 763 is the GRIP domain.

Its subcellular location is the cytoplasm. The protein resides in the golgi apparatus membrane. Its function is as follows. Probably involved in maintaining Golgi structure. The polypeptide is GRIP and coiled-coil domain-containing protein 1 (GCC1) (Homo sapiens (Human)).